Reading from the N-terminus, the 374-residue chain is DNA replication and repair protein RecF (374 aa).

ATP is bound at residue 30 to 37 (GPNAQGKT).

This sequence belongs to the RecF family.

Its subcellular location is the cytoplasm. Its function is as follows. The RecF protein is involved in DNA metabolism; it is required for DNA replication and normal SOS inducibility. RecF binds preferentially to single-stranded, linear DNA. It also seems to bind ATP. The chain is DNA replication and repair protein RecF from Lactobacillus gasseri (strain ATCC 33323 / DSM 20243 / BCRC 14619 / CIP 102991 / JCM 1131 / KCTC 3163 / NCIMB 11718 / NCTC 13722 / AM63).